The chain runs to 118 residues: MNFTALLAAVAAALVGSANATACTATQQTAAYKTLVSILSDASFNQCSTDSGYSMLTAKALPTTAQYKLMCASTACNTMIKKIVTLNPPNCDLTVPTSGLVLNVYSYANGFSNKCSSL.

The first 20 residues, 1 to 20 (MNFTALLAAVAAALVGSANA), serve as a signal peptide directing secretion. Disulfide bonds link cysteine 23–cysteine 91, cysteine 47–cysteine 76, and cysteine 71–cysteine 115.

It belongs to the elicitin family.

Its subcellular location is the secreted. Induces local and distal defense responses (incompatible hypersensitive reaction) in plants from the solanaceae and cruciferae families. Elicits leaf necrosis and causes the accumulation of pathogenesis-related proteins. Might interact with the lipidic molecules of the plasma membrane. This is Beta-elicitin cryptogein from Phytophthora cryptogea.